The primary structure comprises 98 residues: uncharacterized protein (98 aa).

Belongs to the HesB/IscA family.

This is an uncharacterized protein from Staphylococcus aureus (strain MRSA252).